We begin with the raw amino-acid sequence, 168 residues long: ATP synthase subunit b (168 aa).

The helical transmembrane segment at 9 to 29 (AIPFGTIAYTLVVFLILLVML) threads the bilayer.

The protein belongs to the ATPase B chain family. F-type ATPases have 2 components, F(1) - the catalytic core - and F(0) - the membrane proton channel. F(1) has five subunits: alpha(3), beta(3), gamma(1), delta(1), epsilon(1). F(0) has three main subunits: a(1), b(2) and c(10-14). The alpha and beta chains form an alternating ring which encloses part of the gamma chain. F(1) is attached to F(0) by a central stalk formed by the gamma and epsilon chains, while a peripheral stalk is formed by the delta and b chains.

It is found in the cell membrane. F(1)F(0) ATP synthase produces ATP from ADP in the presence of a proton or sodium gradient. F-type ATPases consist of two structural domains, F(1) containing the extramembraneous catalytic core and F(0) containing the membrane proton channel, linked together by a central stalk and a peripheral stalk. During catalysis, ATP synthesis in the catalytic domain of F(1) is coupled via a rotary mechanism of the central stalk subunits to proton translocation. Its function is as follows. Component of the F(0) channel, it forms part of the peripheral stalk, linking F(1) to F(0). This chain is ATP synthase subunit b, found in Bacillus cytotoxicus (strain DSM 22905 / CIP 110041 / 391-98 / NVH 391-98).